Reading from the N-terminus, the 308-residue chain is CMP-N-acetylneuraminate:beta-galactoside alpha-2,3-sialyltransferase (308 aa).

D201 acts as the Proton acceptor in catalysis. Residues L221–R225, F242–E243, and S262–S263 each bind CMP-N-acetyl-beta-neuraminate. Catalysis depends on H223, which acts as the Proton donor.

This sequence belongs to the glycosyltransferase 52 family. Divalent metal cations are not required for the alpha-2,3-sialyltransferase activity. is required as a cofactor.

In terms of biological role, catalyzes the transfer of sialic acid from the substrate CMP-N-acetylneuraminate to lactosyl lipids as preferred acceptor substrates in vitro, forming alpha-2,3-linked sialosides. Beta-1,4-linked galactosyl lipids are better substrates than beta-1,3-linked galactosyl lipids. The natural acceptor substrate may be cell surface oligosaccharides in lipooligosaccharide (LOS), whose sialylation has been demonstrated vital for the virulence of P.multocida. The polypeptide is CMP-N-acetylneuraminate:beta-galactoside alpha-2,3-sialyltransferase (lst) (Pasteurella multocida (strain Pm70)).